The primary structure comprises 598 residues: Leucine aminopeptidase 2, chloroplastic (598 aa).

The N-terminal 71 residues, 1–71 (MATAASTSAA…GHRARMGHTA (71 aa)), are a transit peptide targeting the chloroplast. Mn(2+)-binding residues include Lys367 and Asp372. Lys379 is an active-site residue. Positions 392, 452, and 454 each coordinate Mn(2+). Residue Arg456 is part of the active site.

This sequence belongs to the peptidase M17 family. In terms of assembly, homohexamer (dimer of homotrimers). It depends on Mn(2+) as a cofactor.

Its subcellular location is the plastid. It is found in the chloroplast. The catalysed reaction is Release of an N-terminal amino acid, Xaa-|-Yaa-, in which Xaa is preferably Leu, but may be other amino acids including Pro although not Arg or Lys, and Yaa may be Pro. Amino acid amides and methyl esters are also readily hydrolyzed, but rates on arylamides are exceedingly low.. It catalyses the reaction Release of N-terminal proline from a peptide.. Its function is as follows. Presumably involved in the processing and regular turnover of intracellular proteins. Catalyzes the removal of unsubstituted N-terminal amino acids from various peptides. The sequence is that of Leucine aminopeptidase 2, chloroplastic from Oryza sativa subsp. japonica (Rice).